The chain runs to 442 residues: Putative mannan endo-1,6-alpha-mannosidase C970.02 (442 aa).

The signal sequence occupies residues 1-19; that stretch reads MSLTIFISLATILFSFAEA. Asparagine 25, asparagine 82, asparagine 107, asparagine 131, asparagine 201, asparagine 236, asparagine 261, asparagine 264, asparagine 277, and asparagine 361 each carry an N-linked (GlcNAc...) asparagine glycan.

This sequence belongs to the glycosyl hydrolase 76 family.

The catalysed reaction is Random hydrolysis of (1-&gt;6)-alpha-D-mannosidic linkages in unbranched (1-&gt;6)-mannans.. In Schizosaccharomyces pombe (strain 972 / ATCC 24843) (Fission yeast), this protein is Putative mannan endo-1,6-alpha-mannosidase C970.02.